The chain runs to 433 residues: Enolase (433 aa).

Gln167 is a binding site for (2R)-2-phosphoglycerate. The active-site Proton donor is the Glu209. 3 residues coordinate Mg(2+): Asp246, Glu291, and Asp318. (2R)-2-phosphoglycerate-binding residues include Lys343, Arg372, Ser373, and Lys394. Residue Lys343 is the Proton acceptor of the active site.

Belongs to the enolase family. In terms of assembly, component of the RNA degradosome, a multiprotein complex involved in RNA processing and mRNA degradation. It depends on Mg(2+) as a cofactor.

It is found in the cytoplasm. The protein localises to the secreted. It localises to the cell surface. The catalysed reaction is (2R)-2-phosphoglycerate = phosphoenolpyruvate + H2O. The protein operates within carbohydrate degradation; glycolysis; pyruvate from D-glyceraldehyde 3-phosphate: step 4/5. In terms of biological role, catalyzes the reversible conversion of 2-phosphoglycerate (2-PG) into phosphoenolpyruvate (PEP). It is essential for the degradation of carbohydrates via glycolysis. This chain is Enolase, found in Tolumonas auensis (strain DSM 9187 / NBRC 110442 / TA 4).